A 647-amino-acid polypeptide reads, in one-letter code: RalA-binding protein 1 (647 aa).

Disordered regions lie at residues 1–151 (MTEC…EKKC) and 163–186 (WKEKKKKKKPTQEPEVPQTDAPSL). Thr-2 bears the N-acetylthreonine mark. Residues 24 to 33 (LTRTPSSEEI) show a composition bias toward polar residues. Residues Ser-29, Ser-30, and Ser-34 each carry the phosphoserine modification. Thr-44 carries the post-translational modification Phosphothreonine. Phosphoserine occurs at positions 48 and 62. Residues 52–68 (DILHEPPDIVSDDEKDH) are compositionally biased toward basic and acidic residues. 69–74 (GKKKGK) provides a ligand contact to ATP. The span at 69 to 79 (GKKKGKFKKKE) shows a compositional bias: basic residues. Ser-92 and Ser-93 each carry phosphoserine. Residues 102–118 (KMKRSKGIHVFKKPSFS) are compositionally biased toward basic residues. The interval 102 to 119 (KMKRSKGIHVFKKPSFSK) is nuclear localization signal. The segment covering 119–151 (KKKEKDFKIKEKPKEEKHKEEKHKEEKHKEKKC) has biased composition (basic and acidic residues). Residues 154–219 (FTAADVVKQW…PAVFRECVDY (66 aa)) are mediates association with membranes and could form transmembrane domains. Residues 192 to 380 (APFADAVERT…VLLKQVTRPL (189 aa)) enclose the Rho-GAP domain. Residues 403-499 (RRQEFLLNCL…LTEQEELLAM (97 aa)) form a mediates interaction with RALA and RALB region. Position 418-425 (418-425 (GGIKDFSK)) interacts with ATP. A phosphoserine mark is found at Ser-461 and Ser-463. Residues 500 to 647 (EQFLRRQIAS…PSKDRKETPI (148 aa)) are mediates interaction with REPS1 and REPS2. 2 disordered regions span residues 525–550 (QSRQHGRSETEEYSSDSESESEDEEE) and 601–647 (EQQL…ETPI). Acidic residues predominate over residues 535–550 (EEYSSDSESESEDEEE). The segment covering 628–647 (RAAKEQAKPSPSKDRKETPI) has biased composition (basic and acidic residues). A Phosphoserine modification is found at Ser-637.

In terms of assembly, interacts with the GTP-bound form of RALA (via effector domain); during mitosis, recruits RALBP1 to the mitochondrion where it promotes DNM1L phosphorylation and mitochondrial fission. Interacts with DNM1L; mediates its mitotic kinase cyclin B-CDK1-mediated phosphorylation during mitosis to promote mitochondrial fission. Interacts with the mitotic kinase cyclin B-CDK1 during mitosis. Interacts with the GTP-bound form of RALB (via effector domain). Interacts with REPS1; the interaction is direct and does not affect RALA-binding nor GTPase activator activity of RALBP1. Interacts with REPS2; the interaction is direct and does not affect RALA-binding nor GTPase activator activity of RALBP1. Interacts with EPN1, NUMB and TFAP2A during interphase and mitosis. Interacts with AP2M1; as part of the AP2 complex. Interacts with CDC42. Interacts with RAC1. Tyrosine-phosphorylated upon stimulation of cells with EGF. In terms of processing, may undergo proteolytic cleavage to give peptides which reassemble to form a transporter complex. In terms of tissue distribution, ubiquitously expressed.

It localises to the cell membrane. It is found in the cytoplasm. The protein resides in the cytosol. The protein localises to the cytoskeleton. Its subcellular location is the spindle pole. It localises to the nucleus. It is found in the mitochondrion. It carries out the reaction an S-substituted glutathione(in) + ATP + H2O = an S-substituted glutathione(out) + ADP + phosphate + H(+). The catalysed reaction is ATP + H2O + xenobioticSide 1 = ADP + phosphate + xenobioticSide 2.. The enzyme catalyses leukotriene C4(in) + ATP + H2O = leukotriene C4(out) + ADP + phosphate + H(+). In terms of biological role, multifunctional protein that functions as a downstream effector of RALA and RALB. As a GTPase-activating protein/GAP can inactivate CDC42 and RAC1 by stimulating their GTPase activity. As part of the Ral signaling pathway, may also regulate ligand-dependent EGF and insulin receptors-mediated endocytosis. During mitosis, may act as a scaffold protein in the phosphorylation of EPSIN/EPN1 by the mitotic kinase cyclin B-CDK1, preventing endocytosis during that phase of the cell cycle. During mitosis, also controls mitochondrial fission as an effector of RALA. Recruited to mitochondrion by RALA, acts as a scaffold to foster the mitotic kinase cyclin B-CDK1-mediated phosphorylation and activation of DNM1L. Its function is as follows. Could also function as a primary ATP-dependent active transporter for glutathione conjugates of electrophiles. May also actively catalyze the efflux of a wide range of substrates including xenobiotics like doxorubicin (DOX) contributing to cell multidrug resistance. This chain is RalA-binding protein 1, found in Rattus norvegicus (Rat).